Reading from the N-terminus, the 1226-residue chain is Chitin synthase IV (1226 aa).

Residues 1-205 (MSLPERPGGS…SRKNPATAEQ (205 aa)) form a disordered region. Polar residues predominate over residues 49-65 (SVSSYAETISNPHANTE). A compositionally biased stretch (low complexity) spans 66–75 (TLPLSPTHPT). A compositionally biased stretch (basic and acidic residues) spans 94–107 (IRPERNRIDKDHRN). Polar residues predominate over residues 134–151 (DVSTEPSGGSQTHGSFAD). The span at 163–172 (MSGDDQEKGN) shows a compositional bias: basic and acidic residues. Basic residues predominate over residues 173–198 (TRVKSRPRRSKSGKITKETRHRKSRK). Residues 246–266 (MGLISIILVIMAIVGFLTFGF) form a helical membrane-spanning segment. 3 N-linked (GlcNAc...) asparagine glycosylation sites follow: Asn-381, Asn-421, and Asn-443. Residues 516-536 (ILILSVVGTRFVLALIFQWFI) traverse the membrane as a helical segment. The segment at 572 to 671 (LPGDVGSSAM…PGPAGFIHDS (100 aa)) is disordered. Polar residues-rich tracts occupy residues 580-601 (AMGSSDRTSKRGSSFLPTTSRF) and 618-643 (TTMSSQGPASALLNPNSIYRQGNDSR). Asn-640 carries N-linked (GlcNAc...) asparagine glycosylation. Low complexity predominate over residues 649–666 (PDPYSSAASPSDGPGPAG). 2 N-linked (GlcNAc...) asparagine glycosylation sites follow: Asn-787 and Asn-1035. 3 helical membrane-spanning segments follow: residues 1060-1080 (FVVFVELVGTLVLPAAIAFTF), 1094-1114 (IIPLVLLALILGLPGLLILVT), and 1118-1138 (WSYVVWMLIYLVSLPIWNFVL).

It belongs to the chitin synthase family. Class IV subfamily. In terms of tissue distribution, highly expressed in conidia.

It is found in the cell membrane. It carries out the reaction [(1-&gt;4)-N-acetyl-beta-D-glucosaminyl](n) + UDP-N-acetyl-alpha-D-glucosamine = [(1-&gt;4)-N-acetyl-beta-D-glucosaminyl](n+1) + UDP + H(+). In terms of biological role, polymerizes chitin, a structural polymer of the cell wall and septum, by transferring the sugar moiety of UDP-GlcNAc to the non-reducing end of the growing chitin polymer. Contributes to the production of conidia and the ability of fungal conidia to germinate. Involved in fungal stress tolerances. This Metarhizium acridum (strain CQMa 102) protein is Chitin synthase IV.